We begin with the raw amino-acid sequence, 449 residues long: 3-phosphoshikimate 1-carboxyvinyltransferase (449 aa).

Residues Met-1–Gly-26 form a disordered region. The 3-phosphoshikimate site is built by Lys-28, Ser-29, and Arg-33. Lys-28 serves as a coordination point for phosphoenolpyruvate. Residues Gly-100 and Arg-128 each coordinate phosphoenolpyruvate. The 3-phosphoshikimate site is built by Ser-174, Gln-176, Asp-327, and Lys-354. A phosphoenolpyruvate-binding site is contributed by Gln-176. Residue Asp-327 is the Proton acceptor of the active site. Arg-358 and Arg-403 together coordinate phosphoenolpyruvate.

This sequence belongs to the EPSP synthase family. Monomer.

It is found in the cytoplasm. It catalyses the reaction 3-phosphoshikimate + phosphoenolpyruvate = 5-O-(1-carboxyvinyl)-3-phosphoshikimate + phosphate. It functions in the pathway metabolic intermediate biosynthesis; chorismate biosynthesis; chorismate from D-erythrose 4-phosphate and phosphoenolpyruvate: step 6/7. Its function is as follows. Catalyzes the transfer of the enolpyruvyl moiety of phosphoenolpyruvate (PEP) to the 5-hydroxyl of shikimate-3-phosphate (S3P) to produce enolpyruvyl shikimate-3-phosphate and inorganic phosphate. In Chelativorans sp. (strain BNC1), this protein is 3-phosphoshikimate 1-carboxyvinyltransferase.